Consider the following 392-residue polypeptide: Phosphoglycerate kinase (392 aa).

Residues 21–23, Arg-36, 59–62, Arg-114, and Arg-147 each bind substrate; these read DMN and HLGR. ATP is bound by residues Lys-198, Glu-320, and 346–349; that span reads GGDT.

The protein belongs to the phosphoglycerate kinase family. Monomer.

It is found in the cytoplasm. It catalyses the reaction (2R)-3-phosphoglycerate + ATP = (2R)-3-phospho-glyceroyl phosphate + ADP. It functions in the pathway carbohydrate degradation; glycolysis; pyruvate from D-glyceraldehyde 3-phosphate: step 2/5. The chain is Phosphoglycerate kinase from Neisseria meningitidis serogroup C / serotype 2a (strain ATCC 700532 / DSM 15464 / FAM18).